A 379-amino-acid chain; its full sequence is Cobalt-precorrin-5B C(1)-methyltransferase (379 aa).

This sequence belongs to the CbiD family.

The catalysed reaction is Co-precorrin-5B + S-adenosyl-L-methionine = Co-precorrin-6A + S-adenosyl-L-homocysteine. It participates in cofactor biosynthesis; adenosylcobalamin biosynthesis; cob(II)yrinate a,c-diamide from sirohydrochlorin (anaerobic route): step 6/10. In terms of biological role, catalyzes the methylation of C-1 in cobalt-precorrin-5B to form cobalt-precorrin-6A. The chain is Cobalt-precorrin-5B C(1)-methyltransferase from Citrobacter koseri (strain ATCC BAA-895 / CDC 4225-83 / SGSC4696).